The sequence spans 370 residues: Chaperone protein DnaJ (370 aa).

Residues 4–68 (DYYQVLGVSK…QKRAAYDRFG (65 aa)) form the J domain. Residues 133–211 (GIEKNISFSS…CHGMGRYHKQ (79 aa)) form a CR-type zinc finger. 8 residues coordinate Zn(2+): Cys146, Cys149, Cys163, Cys166, Cys185, Cys188, Cys199, and Cys202. 4 CXXCXGXG motif repeats span residues 146-153 (CDTCHGTG), 163-170 (CDACGGVG), 185-192 (CHKCQGNG), and 199-206 (CKKCHGMG).

It belongs to the DnaJ family. In terms of assembly, homodimer. Zn(2+) is required as a cofactor.

It localises to the cytoplasm. In terms of biological role, participates actively in the response to hyperosmotic and heat shock by preventing the aggregation of stress-denatured proteins and by disaggregating proteins, also in an autonomous, DnaK-independent fashion. Unfolded proteins bind initially to DnaJ; upon interaction with the DnaJ-bound protein, DnaK hydrolyzes its bound ATP, resulting in the formation of a stable complex. GrpE releases ADP from DnaK; ATP binding to DnaK triggers the release of the substrate protein, thus completing the reaction cycle. Several rounds of ATP-dependent interactions between DnaJ, DnaK and GrpE are required for fully efficient folding. Also involved, together with DnaK and GrpE, in the DNA replication of plasmids through activation of initiation proteins. This is Chaperone protein DnaJ from Rickettsia prowazekii (strain Madrid E).